The sequence spans 472 residues: Chromosomal replication initiator protein DnaA (472 aa).

Residues 1-73 (MSNMEHDRWS…LTCWQAEMPE (73 aa)) form a domain I, interacts with DnaA modulators region. Residues 73 to 128 (EVCRIDLTVRSPMRAAVTKEAPAPAEHRRDEHRPAADARSHAAAPAPSNHDALGGS) are domain II. Residues 89-127 (VTKEAPAPAEHRRDEHRPAADARSHAAAPAPSNHDALGG) form a disordered region. Basic and acidic residues predominate over residues 97-112 (AEHRRDEHRPAADARS). Low complexity predominate over residues 113 to 124 (HAAAPAPSNHDA). Positions 129–351 (PLDPRLTFAS…GAINRLLAHS (223 aa)) are domain III, AAA+ region. 4 residues coordinate ATP: Gly-176, Gly-178, Lys-179, and Thr-180. A domain IV, binds dsDNA region spans residues 352 to 472 (KLNAQPVTLE…VESLKRQLQE (121 aa)).

The protein belongs to the DnaA family. As to quaternary structure, oligomerizes as a right-handed, spiral filament on DNA at oriC.

The protein resides in the cytoplasm. Functionally, plays an essential role in the initiation and regulation of chromosomal replication. ATP-DnaA binds to the origin of replication (oriC) to initiate formation of the DNA replication initiation complex once per cell cycle. Binds the DnaA box (a 9 base pair repeat at the origin) and separates the double-stranded (ds)DNA. Forms a right-handed helical filament on oriC DNA; dsDNA binds to the exterior of the filament while single-stranded (ss)DNA is stabiized in the filament's interior. The ATP-DnaA-oriC complex binds and stabilizes one strand of the AT-rich DNA unwinding element (DUE), permitting loading of DNA polymerase. After initiation quickly degrades to an ADP-DnaA complex that is not apt for DNA replication. Binds acidic phospholipids. The chain is Chromosomal replication initiator protein DnaA from Rhodopseudomonas palustris (strain BisB5).